The chain runs to 213 residues: Transcription antitermination protein NusB (213 aa).

It belongs to the NusB family.

In terms of biological role, involved in transcription antitermination. Required for transcription of ribosomal RNA (rRNA) genes. Binds specifically to the boxA antiterminator sequence of the ribosomal RNA (rrn) operons. The sequence is that of Transcription antitermination protein NusB from Picosynechococcus sp. (strain ATCC 27264 / PCC 7002 / PR-6) (Agmenellum quadruplicatum).